A 110-amino-acid chain; its full sequence is UPF0367 protein sync_2587 (110 aa).

Belongs to the UPF0367 family.

In Synechococcus sp. (strain CC9311), this protein is UPF0367 protein sync_2587.